A 157-amino-acid chain; its full sequence is Nicotinate dehydrogenase small FeS subunit (157 aa).

One can recognise a 2Fe-2S ferredoxin-type domain in the interval 4–80 (ITINLNLNGE…ESTIITLEGV (77 aa)). [2Fe-2S] cluster is bound by residues Cys-42, Cys-47, Cys-50, Cys-62, Cys-101, Cys-104, Cys-136, and Cys-138.

In terms of assembly, heterooctamer of NDHM, NDHL, NDHS and NDHF. Dimer of heterotetramers. Requires [2Fe-2S] cluster as cofactor.

The enzyme catalyses nicotinate + NADP(+) + H2O = 6-hydroxynicotinate + NADPH + H(+). It participates in cofactor degradation; nicotinate degradation; 6-hydroxynicotinate from nicotinate: step 1/1. With respect to regulation, reversibly inactivated by selenide and sulfide. Not inhibited by cyanide. Catalyzes the hydroxylation of nicotinate to 6-hydroxynicotinate. Also active against 2-pyrazinecarboxylic acid, but inactive against other nicotinate analogs. This is Nicotinate dehydrogenase small FeS subunit (ndhS) from Eubacterium barkeri (Clostridium barkeri).